The primary structure comprises 375 residues: Protein RecA (375 aa).

Residue 75–82 (GPESSGKT) participates in ATP binding. Residues 339–375 (GPYAKMKDEQTEEAAGDQMDEDKPIDLSPNFDDDDAN) are disordered. Over residues 348–358 (QTEEAAGDQMD) the composition is skewed to acidic residues.

It belongs to the RecA family.

The protein resides in the cytoplasm. Functionally, can catalyze the hydrolysis of ATP in the presence of single-stranded DNA, the ATP-dependent uptake of single-stranded DNA by duplex DNA, and the ATP-dependent hybridization of homologous single-stranded DNAs. It interacts with LexA causing its activation and leading to its autocatalytic cleavage. This Corynebacterium jeikeium (strain K411) protein is Protein RecA.